We begin with the raw amino-acid sequence, 400 residues long: Iron(III) enterobactin esterase (400 aa).

This sequence belongs to the Fes family.

It is found in the cytoplasm. The catalysed reaction is Fe(III)-enterobactin + 3 H2O + H(+) = Fe(III)-[N-(2,3-dihydroxybenzoyl)-L-serine] + 2 N-(2,3-dihydroxybenzoyl)-L-serine. The enzyme catalyses Fe(III)-enterobactin + H2O = Fe(III)-[N-(2,3-dihydroxybenzoyl)-L-serine]3 + H(+). It carries out the reaction Fe(III)-[N-(2,3-dihydroxybenzoyl)-L-serine]3 + H2O + H(+) = Fe(III)-[N-(2,3-dihydroxybenzoyl)-L-serine]2 + N-(2,3-dihydroxybenzoyl)-L-serine. It catalyses the reaction Fe(III)-[N-(2,3-dihydroxybenzoyl)-L-serine]2 + H2O + H(+) = Fe(III)-[N-(2,3-dihydroxybenzoyl)-L-serine] + N-(2,3-dihydroxybenzoyl)-L-serine. The catalysed reaction is enterobactin + 3 H2O = 3 N-(2,3-dihydroxybenzoyl)-L-serine + 2 H(+). In terms of biological role, catalyzes the hydrolysis of ferric enterobactin (Fe-Ent). Is responsible for the release of iron from ferric enterobactin. Also catalyzes the hydrolysis of iron-free enterobactin (Ent). Hydrolyzes ferric monoglucosyl-C-Ent (Fe-MGE) poorly and does not hydrolyze ferric diglucosyl-C-Ent (Fe-DGE) or ferric triglucosyl-C-Ent (Fe-TGE) at all. Also hydrolyzes apo MGE, but catalyzes the hydrolysis of apo DGE very poorly, and does not process apo TGE at all. The catalytic efficiency for processing Fe-Ent is much higher than that for apo Ent, suggesting that Fe-Ent is the physiological substrate. This is Iron(III) enterobactin esterase from Escherichia coli O6:H1 (strain CFT073 / ATCC 700928 / UPEC).